The primary structure comprises 622 residues: Cilia- and flagella-associated protein 206 (622 aa).

Residues 568-593 (NTSQVYPLKEASTQSKREGSSRVPRP) are disordered.

This sequence belongs to the CFAP206 family. As to expression, expressed in the sperm, oviduct, lung, nasal cavity, brain ependyma and choroid plexus.

It is found in the cytoplasm. It localises to the cytoskeleton. Its subcellular location is the cilium axoneme. The protein localises to the cilium basal body. Its function is as follows. Essential for sperm motility and is involved in the regulation of the beating frequency of motile cilia on the epithelial cells of the respiratory tract. Required for the establishment of radial spokes in sperm flagella. This chain is Cilia- and flagella-associated protein 206, found in Mus musculus (Mouse).